A 212-amino-acid chain; its full sequence is MRSADLTAHARIREAAIEQFGRHGFGVGLRAIAEAAGVSAALVIHHFGSKEGLRKACDDFVAEEIRSSKAAALKSNDPTTWLAQMAEIESYAPLMAYLVRSMQSGGELAKMLWQKMIDNAEEYLDEGVRAGTVKPSRDPRARARFLAITGGGGFLLYLQMHENPTDLRAALRDYAHDMVLPSLEVYTEGLLADRAMYEAFLAEAQQGEAHVG.

In terms of domain architecture, HTH tetR-type spans 6-65 (LTAHARIREAAIEQFGRHGFGVGLRAIAEAAGVSAALVIHHFGSKEGLRKACDDFVAEEI). Residues 28-47 (GLRAIAEAAGVSAALVIHHF) constitute a DNA-binding region (H-T-H motif).

As to quaternary structure, homodimer. Interacts with long chain acyl-CoA derivatives. Interacts with several drugs such rhodamine 6G, ethidium and safranin O.

With respect to regulation, interaction with long chain acyl-CoA derivatives (oleoyl-CoA and, to lesser extent, stearoyl-CoA) prevents binding to DNA, leading to the expression of the target genes. Long chain acyl-CoA derivatives may serve as biological indicators of the bacterial metabolic state. Its function is as follows. Regulates the expression of the Rv1217c-Rv1218c multidrug efflux system and its own expression. Acts by binding to promoter regions of Rv1219c and upstream of the Rv1218c gene. Important for survival in prolonged stationary phase and during macrophage infection. May be used to eliminate non-growing mycobacteria. The chain is HTH-type transcriptional regulatory protein RaaS from Mycobacterium tuberculosis (strain ATCC 25618 / H37Rv).